A 694-amino-acid polypeptide reads, in one-letter code: Elongation factor G 2 (694 aa).

The 276-residue stretch at 5–280 (SKYRNIGIFA…AVVDYLPSPT (276 aa)) folds into the tr-type G domain. Residues 14 to 21 (AHVDAGKT), 78 to 82 (DTPGH), and 132 to 135 (NKLD) each bind GTP.

Belongs to the TRAFAC class translation factor GTPase superfamily. Classic translation factor GTPase family. EF-G/EF-2 subfamily.

It localises to the cytoplasm. Its function is as follows. Catalyzes the GTP-dependent ribosomal translocation step during translation elongation. During this step, the ribosome changes from the pre-translocational (PRE) to the post-translocational (POST) state as the newly formed A-site-bound peptidyl-tRNA and P-site-bound deacylated tRNA move to the P and E sites, respectively. Catalyzes the coordinated movement of the two tRNA molecules, the mRNA and conformational changes in the ribosome. The sequence is that of Elongation factor G 2 from Pseudoalteromonas translucida (strain TAC 125).